A 515-amino-acid chain; its full sequence is MTKRALISVSDKSGIIDFAKELKNLGWDIISTGGTKVALDDAGVETIAIDDVTGFPEMMDGRVKTLHPNIHGGLLARRDADSHLQAAKDNNIELIDLVVVNLYPFKETILRPDVTYDLAVENIDIGGPSMLRSAAKNHASVTVVVDSADYATVLGELADASQTTFKTRQRLAAKAFRHTAAYDALIAEYFTAQVGEAKPEKLTITYDLKQAMRYGENPQQDADFYQKALPTDYSIASAKQLNGKELSFNNIRDADAAIRIIRDFKDSPTVVALKHMNPCGIGQADDIETAWDYAYEADPVSIFGGIVVLNREVDAATAEKMHPIFLEIIIAPSYSEEALAILTNKKKNLRILELPFDAQAASEVEAEYTGVVGGLLVQNQDVVAENPSDWQVVTDRQPTEQEATALEFAWKAIKYVKSNGIIITNDHMTLGLGAGQTNRVGSVKIAIEQAKDHLDGAVLASDAFFPFADNIEEIAAAGIKAIIQPGGSVRDQESIDAANKHGLTMIFTGVRHFRH.

The 145-residue stretch at 1–145 folds into the MGS-like domain; that stretch reads MTKRALISVS…KNHASVTVVV (145 aa).

This sequence belongs to the PurH family.

The enzyme catalyses (6R)-10-formyltetrahydrofolate + 5-amino-1-(5-phospho-beta-D-ribosyl)imidazole-4-carboxamide = 5-formamido-1-(5-phospho-D-ribosyl)imidazole-4-carboxamide + (6S)-5,6,7,8-tetrahydrofolate. The catalysed reaction is IMP + H2O = 5-formamido-1-(5-phospho-D-ribosyl)imidazole-4-carboxamide. It functions in the pathway purine metabolism; IMP biosynthesis via de novo pathway; 5-formamido-1-(5-phospho-D-ribosyl)imidazole-4-carboxamide from 5-amino-1-(5-phospho-D-ribosyl)imidazole-4-carboxamide (10-formyl THF route): step 1/1. Its pathway is purine metabolism; IMP biosynthesis via de novo pathway; IMP from 5-formamido-1-(5-phospho-D-ribosyl)imidazole-4-carboxamide: step 1/1. This chain is Bifunctional purine biosynthesis protein PurH, found in Streptococcus agalactiae serotype III (strain NEM316).